Here is a 244-residue protein sequence, read N- to C-terminus: MSKLDLNALNELPKVDRILALAETNAELEKLDAEGRVAWALDNLPGEYVLSSSFGIQAAVSLHLVNQIHPDIPVILTDTGYLFPETYRFIDELTDKLKLNLKVYRATESAAWQEARYGKLWEQGVEGIEKYNDINKVEPMNRALKELNAQTWFAGLRREQSGSRANLPVLAIQRGVFKVLPIIDWDNRTIYQYLQKHGLKYHPLWDEGYLSVGDTHTTRKWEPGMSEEETRFFGLKRECGLHEG.

Catalysis depends on C239, which acts as the Nucleophile; cysteine thiosulfonate intermediate.

Belongs to the PAPS reductase family. CysH subfamily.

It localises to the cytoplasm. It carries out the reaction [thioredoxin]-disulfide + sulfite + adenosine 3',5'-bisphosphate + 2 H(+) = [thioredoxin]-dithiol + 3'-phosphoadenylyl sulfate. Its pathway is sulfur metabolism; hydrogen sulfide biosynthesis; sulfite from sulfate: step 3/3. Catalyzes the formation of sulfite from phosphoadenosine 5'-phosphosulfate (PAPS) using thioredoxin as an electron donor. This Escherichia coli O8 (strain IAI1) protein is Phosphoadenosine 5'-phosphosulfate reductase.